Reading from the N-terminus, the 633-residue chain is Putative oligopeptide transporter HI_0561 (633 aa).

Helical transmembrane passes span 8–28 (GVTFASSIPAAVISMAVLKFF), 45–65 (SAGTLSSVIFVLPGLLMMGYW), 70–90 (FWQTMLICAAGGTLGVLFTIP), 128–148 (IAYGGVLAGLVAFLTNGLRVM), 180–200 (IGIVGGIAMLIGVILTWGVAV), 230–250 (IGVGTIGIAAIWTLLILMKPM), 281–301 (MIYILIATVALIVISLHHFIA), 311–331 (ILLVVVCTFLAVFIGFFVAAA), 345–365 (PISGIGIISVIVISLVLVSIG), 379–399 (FLTALTLFTASIVITTACISN), 420–440 (VALIIGCFVGALVIAPVLEIL), 483–503 (WTYILTGVGLGAVLITIDAFL), 515–535 (VIAVGIGIYLPPSINTPVIVG), 564–584 (LFSAGLIVGESLMGVILAFII), and 604–624 (WDTIGEWFGLIVFIVGIVIFA).

Belongs to the oligopeptide OPT transporter family.

Its subcellular location is the cell membrane. This Haemophilus influenzae (strain ATCC 51907 / DSM 11121 / KW20 / Rd) protein is Putative oligopeptide transporter HI_0561.